We begin with the raw amino-acid sequence, 453 residues long: Probable L-galactonate transporter (453 aa).

Residues Met-1–Pro-23 are disordered. Over Met-1–Thr-42 the chain is Periplasmic. Over residues Pro-10 to Ala-20 the composition is skewed to polar residues. Residues Ala-43 to Val-63 traverse the membrane as a helical segment. Over Ala-64–Glu-71 the chain is Cytoplasmic. A helical membrane pass occupies residues Leu-72–Ile-92. The Periplasmic segment spans residues Ala-93–Arg-107. Residues Leu-108–His-128 traverse the membrane as a helical segment. Residues Asn-129 to Ala-174 are Cytoplasmic-facing. A helical membrane pass occupies residues Ser-175–Trp-195. Residue Arg-196 is a topological domain, periplasmic. Residues Gly-197–Tyr-217 traverse the membrane as a helical segment. Over Arg-218–Met-259 the chain is Cytoplasmic. The helical transmembrane segment at Trp-260–Leu-280 threads the bilayer. Topologically, residues Pro-281 to Thr-295 are periplasmic. The helical transmembrane segment at Gly-296–Val-316 threads the bilayer. Over Thr-317–Lys-332 the chain is Cytoplasmic. The chain crosses the membrane as a helical span at residues Ile-333–Thr-353. Topologically, residues Thr-354–Val-359 are periplasmic. Residues Leu-360–Ile-380 form a helical membrane-spanning segment. At His-381–Ser-394 the chain is on the cytoplasmic side. A helical transmembrane segment spans residues Ile-395 to Val-415. Residues Asp-416 to Arg-422 are Periplasmic-facing. A helical transmembrane segment spans residues Leu-423–Val-443. At Arg-444–Asp-453 the chain is on the cytoplasmic side.

Belongs to the major facilitator superfamily. Phthalate permease family.

It localises to the cell inner membrane. It catalyses the reaction L-galactonate(in) + H(+)(in) = L-galactonate(out) + H(+)(out). Functionally, probably responsible for the transport of L-galactonate from the periplasm across the inner membrane. Is essential for growth on L-galactonate as the sole carbon source. In Escherichia coli (strain K12), this protein is Probable L-galactonate transporter (lgoT).